A 904-amino-acid chain; its full sequence is Protein translocase subunit SecA (904 aa).

ATP contacts are provided by residues glutamine 89, 107-111 (GEGKT), and aspartate 496. Residues 870 to 904 (GGFQELSSGTPSPTVTVTTSSGGGTERKTSRRRKR) form a disordered region. Low complexity predominate over residues 876 to 889 (SSGTPSPTVTVTTS).

This sequence belongs to the SecA family. In terms of assembly, monomer and homodimer. Part of the essential Sec protein translocation apparatus which comprises SecA, SecYEG and auxiliary proteins SecDF. Other proteins may also be involved.

The protein resides in the cell inner membrane. It localises to the cytoplasm. It catalyses the reaction ATP + H2O + cellular proteinSide 1 = ADP + phosphate + cellular proteinSide 2.. Functionally, part of the Sec protein translocase complex. Interacts with the SecYEG preprotein conducting channel. Has a central role in coupling the hydrolysis of ATP to the transfer of proteins into and across the cell membrane, serving as an ATP-driven molecular motor driving the stepwise translocation of polypeptide chains across the membrane. The sequence is that of Protein translocase subunit SecA from Leptospira borgpetersenii serovar Hardjo-bovis (strain JB197).